We begin with the raw amino-acid sequence, 133 residues long: DNA-binding protein inhibitor ID-2-A (133 aa).

The bHLH domain occupies 23–75 (ARSKTPVDDPMSLLYNMNDCYSKLKELVPSIPQNKKVSKMEILQHVIDYILDL). The short motif at 106–115 (LNTDISILSL) is the Nuclear export signal element.

As to quaternary structure, heterodimer with other HLH proteins. As to expression, in the embryo, expressed in a range of tissues, with primary expression in the developing pronephros; expressed in the pronephric anlage, and by the swimming tadpole stages expressed robustly in the pronephric tubules and weakly in the pronephric duct. Expressed in the secondary heart field. In the developing nervous system, expressed in the neural crest and in the neural folds during neurula stages, and at stage 20 in the neural tube, ventral mesoderm and mid-hindbrain boundary. By early tailbud stages, expressed in the neural tube, somites and branchial arches. In tadpoles (stage 37/38), expressed in the heart, eye, otic vesicle, somites and branchial arches. Also expressed in migrating muscle cells. Expressed at a low level in limbs, with expression decreasing as limbs develop, but expressed at a high level in blastemas (regenerated limbs), where expression is localized primarily to the blastemal epidermis. Widely expressed in adults with highest expression in the spleen, skin, intestine and brain, and at a much lower level in testis and heart.

It is found in the cytoplasm. Its subcellular location is the nucleus. In terms of biological role, transcriptional regulator (lacking a basic DNA binding domain) which negatively regulates the basic helix-loop-helix (bHLH) transcription factors by forming heterodimers and inhibiting their DNA binding and transcriptional activity. Inhibits the activity of both neurogenic (neurod1/neuroD) and myogenic (myod1/myoD) bHLH factors. May play a role in the regulation of the circadian clock. The protein is DNA-binding protein inhibitor ID-2-A (id2-a) of Xenopus laevis (African clawed frog).